The primary structure comprises 658 residues: Phosphomethylpyrimidine synthase (658 aa).

Residues 1–22 (MNNSTDAVNPAKKPQTRREKRE) form a disordered region. Residues N248, M277, Y306, H342, 362–364 (SRG), 403–406 (DGLR), and E442 contribute to the substrate site. H446 is a Zn(2+) binding site. Y469 contributes to the substrate binding site. A Zn(2+)-binding site is contributed by H510. [4Fe-4S] cluster contacts are provided by C590, C593, and C598.

This sequence belongs to the ThiC family. As to quaternary structure, homodimer. [4Fe-4S] cluster serves as cofactor.

It catalyses the reaction 5-amino-1-(5-phospho-beta-D-ribosyl)imidazole + S-adenosyl-L-methionine = 4-amino-2-methyl-5-(phosphooxymethyl)pyrimidine + CO + 5'-deoxyadenosine + formate + L-methionine + 3 H(+). The protein operates within cofactor biosynthesis; thiamine diphosphate biosynthesis. Catalyzes the synthesis of the hydroxymethylpyrimidine phosphate (HMP-P) moiety of thiamine from aminoimidazole ribotide (AIR) in a radical S-adenosyl-L-methionine (SAM)-dependent reaction. The protein is Phosphomethylpyrimidine synthase of Colwellia psychrerythraea (strain 34H / ATCC BAA-681) (Vibrio psychroerythus).